The sequence spans 124 residues: p53-regulated apoptosis-inducing protein 1 (124 aa).

The segment covering 1–16 (MGSSSEASFRSAQASC) has biased composition (polar residues). The tract at residues 1 to 46 (MGSSSEASFRSAQASCSGARRQGLGRGDQNLSVMPPNGRAQTHTPG) is disordered.

In terms of tissue distribution, only found to be expressed in thymus.

It is found in the mitochondrion. May play an important role in mediating p53/TP53-dependent apoptosis. The sequence is that of p53-regulated apoptosis-inducing protein 1 (TP53AIP1) from Homo sapiens (Human).